Reading from the N-terminus, the 207-residue chain is 3-demethoxyubiquinol 3-hydroxylase (207 aa).

6 residues coordinate Fe cation: glutamate 56, glutamate 86, histidine 89, glutamate 138, glutamate 170, and histidine 173.

This sequence belongs to the COQ7 family. Requires Fe cation as cofactor.

The protein localises to the cell membrane. The enzyme catalyses a 5-methoxy-2-methyl-3-(all-trans-polyprenyl)benzene-1,4-diol + AH2 + O2 = a 3-demethylubiquinol + A + H2O. Its pathway is cofactor biosynthesis; ubiquinone biosynthesis. In terms of biological role, catalyzes the hydroxylation of 2-nonaprenyl-3-methyl-6-methoxy-1,4-benzoquinol during ubiquinone biosynthesis. The sequence is that of 3-demethoxyubiquinol 3-hydroxylase from Cupriavidus taiwanensis (strain DSM 17343 / BCRC 17206 / CCUG 44338 / CIP 107171 / LMG 19424 / R1) (Ralstonia taiwanensis (strain LMG 19424)).